The following is a 408-amino-acid chain: Succinylornithine transaminase (408 aa).

Lys252 is modified (N6-(pyridoxal phosphate)lysine).

The protein belongs to the class-III pyridoxal-phosphate-dependent aminotransferase family. AstC subfamily. The cofactor is pyridoxal 5'-phosphate.

The enzyme catalyses N(2)-succinyl-L-ornithine + 2-oxoglutarate = N-succinyl-L-glutamate 5-semialdehyde + L-glutamate. It participates in amino-acid degradation; L-arginine degradation via AST pathway; L-glutamate and succinate from L-arginine: step 3/5. In terms of biological role, catalyzes the transamination of N(2)-succinylornithine and alpha-ketoglutarate into N(2)-succinylglutamate semialdehyde and glutamate. Can also act as an acetylornithine aminotransferase. This Salmonella heidelberg (strain SL476) protein is Succinylornithine transaminase.